The sequence spans 181 residues: HGPRTase-like protein 2 (181 aa).

It belongs to the purine/pyrimidine phosphoribosyltransferase family. Archaeal HPRT subfamily.

In terms of biological role, may catalyze a purine salvage reaction, the substrate is unknown. The sequence is that of HGPRTase-like protein 2 from Haloterrigena turkmenica (strain ATCC 51198 / DSM 5511 / JCM 9101 / NCIMB 13204 / VKM B-1734 / 4k) (Halococcus turkmenicus).